Reading from the N-terminus, the 550-residue chain is 2-succinyl-5-enolpyruvyl-6-hydroxy-3-cyclohexene-1-carboxylate synthase (550 aa).

Belongs to the TPP enzyme family. MenD subfamily. As to quaternary structure, homodimer. It depends on Mg(2+) as a cofactor. Mn(2+) is required as a cofactor. Thiamine diphosphate serves as cofactor.

The enzyme catalyses isochorismate + 2-oxoglutarate + H(+) = 5-enolpyruvoyl-6-hydroxy-2-succinyl-cyclohex-3-ene-1-carboxylate + CO2. The protein operates within quinol/quinone metabolism; 1,4-dihydroxy-2-naphthoate biosynthesis; 1,4-dihydroxy-2-naphthoate from chorismate: step 2/7. Its pathway is quinol/quinone metabolism; menaquinone biosynthesis. Catalyzes the thiamine diphosphate-dependent decarboxylation of 2-oxoglutarate and the subsequent addition of the resulting succinic semialdehyde-thiamine pyrophosphate anion to isochorismate to yield 2-succinyl-5-enolpyruvyl-6-hydroxy-3-cyclohexene-1-carboxylate (SEPHCHC). The sequence is that of 2-succinyl-5-enolpyruvyl-6-hydroxy-3-cyclohexene-1-carboxylate synthase from Flavobacterium psychrophilum (strain ATCC 49511 / DSM 21280 / CIP 103535 / JIP02/86).